A 65-amino-acid polypeptide reads, in one-letter code: Antitoxin VapB32 (65 aa).

Positions 46-65 (ALGGTDPQATAAPRRRTSPR) are disordered.

Functionally, antitoxin component of a type II toxin-antitoxin (TA) system. The sequence is that of Antitoxin VapB32 (vapB32) from Mycobacterium tuberculosis (strain CDC 1551 / Oshkosh).